The sequence spans 417 residues: UDP-N-acetylglucosamine 1-carboxyvinyltransferase (417 aa).

22 to 23 (KN) contributes to the phosphoenolpyruvate binding site. R93 is a binding site for UDP-N-acetyl-alpha-D-glucosamine. C117 serves as the catalytic Proton donor. C117 is modified (2-(S-cysteinyl)pyruvic acid O-phosphothioketal). UDP-N-acetyl-alpha-D-glucosamine contacts are provided by residues 122 to 126 (RPVDQ), D305, and I327.

Belongs to the EPSP synthase family. MurA subfamily.

It is found in the cytoplasm. The catalysed reaction is phosphoenolpyruvate + UDP-N-acetyl-alpha-D-glucosamine = UDP-N-acetyl-3-O-(1-carboxyvinyl)-alpha-D-glucosamine + phosphate. Its pathway is cell wall biogenesis; peptidoglycan biosynthesis. Its function is as follows. Cell wall formation. Adds enolpyruvyl to UDP-N-acetylglucosamine. The chain is UDP-N-acetylglucosamine 1-carboxyvinyltransferase from Dechloromonas aromatica (strain RCB).